The sequence spans 110 residues: Snake venom vascular endothelial growth factor toxin ICPP (110 aa).

A Pyrrolidone carboxylic acid modification is found at glutamine 1. Disulfide bonds link cysteine 14–cysteine 56, cysteine 45–cysteine 91, and cysteine 49–cysteine 93.

Homodimer; disulfide-linked. Interacts with high affinity with KDR/VEGFR-2, and with a lower affinity with neuropilin-1 (NRP1) and neuropilin-2 (NRP2). As to expression, expressed by the venom gland.

The protein resides in the secreted. In terms of biological role, snake venom VEGFs may contribute to venom dispersion and prey subjugation by inducing vascular permeability and hypotension. This protein increases vascular permeability and angiogenesis probably through VEGF receptor (KDR/VEGFR-2) signaling. Induces DNA synthesis in human umbilical vein endothelial cells, and promotes mouse embryonic stem cell proliferation and differentiation. It may also induce a drastic hypotensive effect after intravenous injection. The hypotension is mediated by nitric oxide (NO), which is produced by VEGF-activated endothelium NO synthase. In Macrovipera lebetinus (Levantine viper), this protein is Snake venom vascular endothelial growth factor toxin ICPP.